A 163-amino-acid chain; its full sequence is Nucleotide-binding protein YajQ (163 aa).

It belongs to the YajQ family.

Functionally, nucleotide-binding protein. This chain is Nucleotide-binding protein YajQ, found in Salmonella paratyphi A (strain ATCC 9150 / SARB42).